The following is a 210-amino-acid chain: Glutathione S-transferase 2 (210 aa).

The region spanning 1-80 (MDFYYLPLSA…YLVEKYGKQN (80 aa)) is the GST N-terminal domain. Glutathione is bound by residues serine 9, 50–52 (HTI), and 64–66 (ESR). In terms of domain architecture, GST C-terminal spans 87–208 (CPKKRALINQ…AGCLEMKKYF (122 aa)).

This sequence belongs to the GST superfamily. Theta family. As to quaternary structure, homodimer.

It catalyses the reaction RX + glutathione = an S-substituted glutathione + a halide anion + H(+). Conjugation of reduced glutathione to a wide number of exogenous and endogenous hydrophobic electrophiles. This Musca domestica (House fly) protein is Glutathione S-transferase 2 (Gst2).